The primary structure comprises 250 residues: Cobalt transport protein CbiM (250 aa).

A signal peptide spans 1–26; the sequence is MNKKEKRIVAIAAAFALCFGISPAVN. 6 helical membrane-spanning segments follow: residues 38–58, 68–88, 102–122, 134–154, 165–185, and 209–229; these read KYCI…YFSI, SITM…LKIP, LGAI…VLIF, TLGA…FGIY, LSGI…VTSI, and FAPT…VIMI.

Belongs to the CbiM family. As to quaternary structure, forms an energy-coupling factor (ECF) transporter complex composed of an ATP-binding protein (A component, CbiO), a transmembrane protein (T component, CbiQ) and 2 possible substrate-capture proteins (S components, CbiM and CbiN) of unknown stoichimetry.

The protein localises to the cell membrane. The protein operates within cofactor biosynthesis; adenosylcobalamin biosynthesis. In terms of biological role, part of the energy-coupling factor (ECF) transporter complex CbiMNOQ involved in cobalt import. This Lachnoclostridium phytofermentans (strain ATCC 700394 / DSM 18823 / ISDg) (Clostridium phytofermentans) protein is Cobalt transport protein CbiM.